Consider the following 1388-residue polypeptide: DNA-directed RNA polymerase subunit beta'' (1388 aa).

Zn(2+)-binding residues include cysteine 224, cysteine 294, cysteine 301, and cysteine 304.

It belongs to the RNA polymerase beta' chain family. RpoC2 subfamily. In terms of assembly, in plastids the minimal PEP RNA polymerase catalytic core is composed of four subunits: alpha, beta, beta', and beta''. When a (nuclear-encoded) sigma factor is associated with the core the holoenzyme is formed, which can initiate transcription. Requires Zn(2+) as cofactor.

Its subcellular location is the plastid. The protein localises to the chloroplast. The enzyme catalyses RNA(n) + a ribonucleoside 5'-triphosphate = RNA(n+1) + diphosphate. In terms of biological role, DNA-dependent RNA polymerase catalyzes the transcription of DNA into RNA using the four ribonucleoside triphosphates as substrates. The polypeptide is DNA-directed RNA polymerase subunit beta'' (Phalaenopsis aphrodite subsp. formosana (Moth orchid)).